The primary structure comprises 266 residues: Energy-coupling factor transporter transmembrane protein EcfT 1 (266 aa).

5 helical membrane passes run 33–53 (IGILFLANNWWTYALMVLFTL), 73–93 (LIWLILFTVVMQILFASGGTI), 107–127 (LLNGVFVFLRFVLIIIMSTVI), 152–172 (VPVNDIALMISVALRFIPTLM), and 243–263 (HFGDLIAACVMILLTAGLVIL).

This sequence belongs to the energy-coupling factor EcfT family. In terms of assembly, forms a stable energy-coupling factor (ECF) transporter complex composed of 2 membrane-embedded substrate-binding proteins (S component), 2 ATP-binding proteins (A component) and 2 transmembrane proteins (T component). May be able to interact with more than 1 S component at a time.

It localises to the cell membrane. In terms of biological role, transmembrane (T) component of an energy-coupling factor (ECF) ABC-transporter complex. Unlike classic ABC transporters this ECF transporter provides the energy necessary to transport a number of different substrates. The chain is Energy-coupling factor transporter transmembrane protein EcfT 1 from Listeria monocytogenes serotype 1/2a (strain 08-5578).